The sequence spans 545 residues: DNA mismatch repair protein MutL (545 aa).

Residues 517-545 (RRSGARGGGEARPRPQEESFPEAPLPREP) are disordered.

This sequence belongs to the DNA mismatch repair MutL/HexB family.

Its function is as follows. This protein is involved in the repair of mismatches in DNA. It is required for dam-dependent methyl-directed DNA mismatch repair. May act as a 'molecular matchmaker', a protein that promotes the formation of a stable complex between two or more DNA-binding proteins in an ATP-dependent manner without itself being part of a final effector complex. This Thermus thermophilus (strain ATCC 27634 / DSM 579 / HB8) protein is DNA mismatch repair protein MutL.